Reading from the N-terminus, the 570-residue chain is Multidrug and toxin extrusion protein 1 (570 aa).

An N-acetylmethionine modification is found at M1. The Cytoplasmic portion of the chain corresponds to 1-37 (MEAPEEPAPVRGGPEATLEVRGSRCLRLSAFREELRA). The chain crosses the membrane as a helical span at residues 38-58 (LLVLAGPAFLVQLMVFLISFI). Topologically, residues 59 to 72 (SSVFCGHLGKLELD) are extracellular. The chain crosses the membrane as a helical span at residues 73–93 (AVTLAIAVINVTGVSVGFGLS). Residues 94–123 (SACDTLISQTYGSQNLKHVGVILQRSALVL) are Cytoplasmic-facing. A helical membrane pass occupies residues 124-144 (LLCCFPCWALFLNTQHILLLF). Topologically, residues 145–152 (RQDPDVSR) are extracellular. The helical transmembrane segment at 153-173 (LTQTYVTIFIPALPATFLYML) threads the bilayer. Residues 174–176 (QVK) are Cytoplasmic-facing. A helical transmembrane segment spans residues 177–197 (YLLNQGIVLPQIVTGVAANLV). The Extracellular portion of the chain corresponds to 198–216 (NALANYLFLHQLHLGVIGS). A helical transmembrane segment spans residues 217–237 (ALANLISQYTLALLLFLYILG). Residues 238–256 (KKLHQATWGGWSLECLQDW) lie on the Cytoplasmic side of the membrane. A helical transmembrane segment spans residues 257 to 276 (ASFLRLAIPSMLMLCMEWWA). At 277–295 (YEVGSFLSGILGMVELGAQ) the chain is on the extracellular side. A helical transmembrane segment spans residues 296 to 316 (SIVYELAIIVYMVPAGFSVAA). The Cytoplasmic segment spans residues 317-336 (SVRVGNALGAGDMEQARKSS). The chain crosses the membrane as a helical span at residues 337–357 (TVSLLITVLFAVAFSVLLLSC). At 358–370 (KDHVGYIFTTDRD) the chain is on the extracellular side. The helical transmembrane segment at 371 to 391 (IINLVAQVVPIYAVSHLFEAL) threads the bilayer. The Cytoplasmic portion of the chain corresponds to 392 to 408 (ACTSGGVLRGSGNQKVG). The chain crosses the membrane as a helical span at residues 409-429 (AIVNTIGYYVVGLPIGIALMF). The Extracellular portion of the chain corresponds to 430–437 (ATTLGVMG). The helical transmembrane segment at 438-458 (LWSGIIICTVFQAVCFLGFII) threads the bilayer. At 459-546 (QLNWKKACQQ…LSRKQLVLRR (88 aa)) the chain is on the cytoplasmic side. The segment at 508 to 534 (DVGKTGEPQSDQQMRQEEPLPEHPQDG) is disordered. The span at 521-533 (MRQEEPLPEHPQD) shows a compositional bias: basic and acidic residues. A helical transmembrane segment spans residues 547 to 567 (GLLLLGVFLILLVGILVRFYV). At 568–570 (RIQ) the chain is on the extracellular side.

It belongs to the multi antimicrobial extrusion (MATE) (TC 2.A.66.1) family. In terms of tissue distribution, widely expressed. The highest expression is found in adrenal gland, and to a lower extent in liver, skeletal muscle and kidney. In testis, primarily localized throughout the adluminal compartment of the seminiferous tubules with expression at the peritubular myoid cells and Leydig cells.

Its subcellular location is the cell membrane. It localises to the apical cell membrane. The catalysed reaction is thiamine(out) + H(+)(in) = thiamine(in) + H(+)(out). The enzyme catalyses estrone 3-sulfate(in) + H(+)(out) = estrone 3-sulfate(out) + H(+)(in). It catalyses the reaction creatinine(in) + H(+)(out) = creatinine(out) + H(+)(in). It carries out the reaction agmatine(in) + H(+)(out) = agmatine(out) + H(+)(in). Multidrug efflux pump that functions as a H(+)/organic cation antiporter. Plays a physiological role in the excretion of cationic compounds including endogenous metabolites, drugs, toxins through the kidney and liver, into urine and bile respectively. Mediates the efflux of endogenous compounds such as creatinine, vitamin B1/thiamine, agmatine and estrone-3-sulfate. May also contribute to regulate the transport of cationic compounds in testis across the blood-testis-barrier. The sequence is that of Multidrug and toxin extrusion protein 1 from Homo sapiens (Human).